The chain runs to 368 residues: 3-dehydroquinate synthase (368 aa).

It belongs to the archaeal-type DHQ synthase family.

The enzyme catalyses 2-amino-2,3,7-trideoxy-D-lyxo-hept-6-ulosonate + NAD(+) + H2O = 3-dehydroquinate + NH4(+) + NADH + H(+). In terms of biological role, catalyzes the oxidative deamination and cyclization of 2-amino-3,7-dideoxy-D-threo-hept-6-ulosonic acid (ADH) to yield 3-dehydroquinate (DHQ), which is fed into the canonical shikimic pathway of aromatic amino acid biosynthesis. The chain is 3-dehydroquinate synthase from Methanobrevibacter smithii (strain ATCC 35061 / DSM 861 / OCM 144 / PS).